Consider the following 266-residue polypeptide: Putative carbamate hydrolase RutD (266 aa).

The AB hydrolase-1 domain occupies 15-239 (PVVVLSAGLG…RVEMPWGGHA (225 aa)).

Belongs to the AB hydrolase superfamily. Hydrolase RutD family.

It catalyses the reaction carbamate + 2 H(+) = NH4(+) + CO2. Functionally, involved in pyrimidine catabolism. May facilitate the hydrolysis of carbamate, a reaction that can also occur spontaneously. This Klebsiella variicola (strain At-22) protein is Putative carbamate hydrolase RutD.